A 177-amino-acid polypeptide reads, in one-letter code: Large ribosomal subunit protein uL6 (177 aa).

Belongs to the universal ribosomal protein uL6 family. Part of the 50S ribosomal subunit.

Its function is as follows. This protein binds to the 23S rRNA, and is important in its secondary structure. It is located near the subunit interface in the base of the L7/L12 stalk, and near the tRNA binding site of the peptidyltransferase center. In Neisseria meningitidis serogroup B (strain ATCC BAA-335 / MC58), this protein is Large ribosomal subunit protein uL6.